The sequence spans 410 residues: Peptidase T (410 aa).

Residue His-79 participates in Zn(2+) binding. Asp-81 is a catalytic residue. Zn(2+) is bound at residue Asp-142. The active-site Proton acceptor is the Glu-176. Residues Glu-177, Asp-199, and His-381 each coordinate Zn(2+).

The protein belongs to the peptidase M20B family. The cofactor is Zn(2+).

The protein localises to the cytoplasm. It carries out the reaction Release of the N-terminal residue from a tripeptide.. Cleaves the N-terminal amino acid of tripeptides. This Listeria welshimeri serovar 6b (strain ATCC 35897 / DSM 20650 / CCUG 15529 / CIP 8149 / NCTC 11857 / SLCC 5334 / V8) protein is Peptidase T.